A 488-amino-acid polypeptide reads, in one-letter code: MQYRDLRDFIRELEKRGELKRIQTPVSPILEMTEICDRTLRKGGPALLFEKPTGFDVPVLGNLFGTPKRVALGMGAEDVAELREIGKLLAFLKEPEPPKGLKDAWSKLPIFKKVISMAPKVVKDAPCHEVIEEGEDVDLNRLPIQHCWPGDVAPLITWGLTITKGPNKERQNLGIYRQQVIGRNKVIMRWLSHRGGALDYREWCQKYPDKPYPVCVALGADPATILGAVTPVPDTLSEYAFAGLLRGHRTELIKAVGSDLQVPASAEIVLEGVIHPGETAPEGPYGDHTGYYNEVDTFPVFTVERITRRREPIYHSTYTGRPPDEPAILGVALNEVFVPILQKQFPEITDFYLPPEGCSYRMAVVTMKKQYPGHAKRVMLGVWSFLRQFMYTKFVIVTDDDINARDWNDVIWAITTRMDPKRDTVMIDNTPIDYLDFASPISGLGSKMGLDATHKWPGETSREWGRAIEKDPAVVARVDALWGELGID.

N172 contributes to the Mn(2+) binding site. Prenylated FMN is bound by residues 175–177 (IYR), 189–191 (RWL), and 194–195 (RG). E238 provides a ligand contact to Mn(2+). Catalysis depends on D287, which acts as the Proton donor.

The protein belongs to the UbiD family. As to quaternary structure, homohexamer. It depends on prenylated FMN as a cofactor. Requires Mn(2+) as cofactor.

The protein localises to the cell membrane. It carries out the reaction a 4-hydroxy-3-(all-trans-polyprenyl)benzoate + H(+) = a 2-(all-trans-polyprenyl)phenol + CO2. The protein operates within cofactor biosynthesis; ubiquinone biosynthesis. In terms of biological role, catalyzes the decarboxylation of 3-octaprenyl-4-hydroxy benzoate to 2-octaprenylphenol, an intermediate step in ubiquinone biosynthesis. This Ectopseudomonas mendocina (strain ymp) (Pseudomonas mendocina) protein is 3-octaprenyl-4-hydroxybenzoate carboxy-lyase.